The following is a 165-amino-acid chain: Neuropeptide W (165 aa).

The signal sequence occupies residues 1-32 (MAWRPGERGAPASRPRLALLLLLLLLPLPSGA). A propeptide spanning residues 65–165 (ALRAAAGPLA…GLPCLAPGPF (101 aa)) is cleaved from the precursor. A disordered region spans residues 106-165 (SQAGIPVRAPRSPRAPEPALEPESLDFSGAGQRLRRDVSRPAVDPAANRLGLPCLAPGPF). The segment covering 113 to 127 (RAPRSPRAPEPALEP) has biased composition (low complexity). O-linked (Xyl...) (chondroitin sulfate) serine glycosylation is present at serine 133.

It belongs to the neuropeptide B/W family. In terms of tissue distribution, detected in cerebrospinal fluid and urine (at protein level). Detected at high levels in the substantia nigra, fetal kidney and trachea; at lower levels in testis, uterus, ovary and placenta. Not detectable in many regions of the central nervous system. Also detected at high levels in lymphoblastic leukemia and colorectal adenocarcinoma.

It localises to the secreted. Functionally, plays a regulatory role in the organization of neuroendocrine signals accessing the anterior pituitary gland. Stimulates water drinking and food intake. May play a role in the hypothalamic response to stress. NPW23 activates GPR7 and GPR8 more efficiently than NPW30. This is Neuropeptide W (NPW) from Homo sapiens (Human).